We begin with the raw amino-acid sequence, 266 residues long: Agamous-like MADS-box protein AGL97 (266 aa).

The region spanning 3-63 (GVKRKIAIEK…SNSNAAFYSF (61 aa)) is the MADS-box domain. Residues 88-130 (WEDESLLKSENLEELREAMDSMSTMLRDLKELEKQRDHQTQTL) are a coiled coil.

In terms of assembly, interacts with AGL27 and AGL62.

The protein resides in the nucleus. Putative transcription factor. The sequence is that of Agamous-like MADS-box protein AGL97 (AGL97) from Arabidopsis thaliana (Mouse-ear cress).